A 55-amino-acid polypeptide reads, in one-letter code: MSFNKTTLFLLFKKIKINITPTTLFIIFFTYSYYYCGFLQSFNYIIYKIYLNKNK.

Residues 24 to 46 traverse the membrane as a helical segment; it reads LFIIFFTYSYYYCGFLQSFNYII.

It is found in the membrane. This is an uncharacterized protein from Dictyostelium discoideum (Social amoeba).